The following is a 356-amino-acid chain: Protein HEXIM1 (356 aa).

Composition is skewed to basic and acidic residues over residues 1–11 and 24–47; these read MAEPLLSEHQH and VHEEQNSERPPSAEERVPKEDSRW. The disordered stretch occupies residues 1-160; the sequence is MAEPLLSEHQ…RRRPSKKKRH (160 aa). Residues 48–58 show a composition bias toward polar residues; it reads QSRASLQSGSR. Residues 84 to 93 are compositionally biased toward basic and acidic residues; that stretch reads CLEKGEKGQN. Phosphoserine occurs at positions 98 and 103. Residues 145-160 are compositionally biased toward basic residues; it reads LGKKKHRRRPSKKKRH. The segment at 147–174 is basic region; mediates nuclear localization and interaction with 7SK snRNA and NR3C1; sequence KKKHRRRPSKKKRHWKPYYKLTWEEKKK. The interaction with P-TEFb stretch occupies residues 199-202; that stretch reads PYNT. Residues 207 to 247 are autoinhibitory acidic region; in absence of 7SK snRNA interacts with the basic region preventing interaction with P-TEFb and modulating subcellular localization; sequence MDDHDQEEPDLKTGLYPKRAAAKSDDTSDEDFVEEAGEEDG. The disordered stretch occupies residues 209–259; that stretch reads DHDQEEPDLKTGLYPKRAAAKSDDTSDEDFVEEAGEEDGGSDGMGGDGSEF. Serine 230 carries the phosphoserine modification. Threonine 233 is subject to Phosphothreonine. The segment covering 233–248 has biased composition (acidic residues); it reads TSDEDFVEEAGEEDGG. Phosphoserine is present on residues serine 234, serine 249, and serine 257. Residues 280–346 are a coiled coil; that stretch reads SKQELIKEYL…LTENELHRQQ (67 aa). A mediates interaction with CCNT1 region spans residues 283-311; it reads ELIKEYLELEKCLSRKEDENNRLRLESKR. Residues 307–352 are required for inhibition of ESR1-dependent transcription; the sequence is LESKRLGGVDARVRELELELDRLRAENRQLLTENELHRQQERAPPS. The tract at residues 337-356 is disordered; sequence LTENELHRQQERAPPSKFGD.

This sequence belongs to the HEXIM family. In terms of assembly, homooligomer and heterooligomer with HEXIM2; probably dimeric. Core component of the 7SK RNP complex, at least composed of 7SK RNA, LARP7, MEPCE, HEXIM1 (or HEXIM2) and P-TEFb (composed of CDK9 and CCNT1/cyclin-T1). Interacts with the N-CoR complex through NCOR1. Interacts with ESR1 and NR3C1. May interact with NF-kappa-B through RELA. Interacts with CCNT2; mediates formation of a tripartite complex with KPNA2. Part of the HDP-RNP complex composed of at least HEXIM1, PRKDC, XRCC5, XRCC6, paraspeckle proteins (SFPQ, NONO, PSPC1, RBM14, and MATR3) and NEAT1 non-coding RNA.

Its subcellular location is the nucleus. It is found in the cytoplasm. Functionally, transcriptional regulator which functions as a general RNA polymerase II transcription inhibitor. Core component of the 7SK RNP complex: in cooperation with 7SK snRNA sequesters P-TEFb in a large inactive 7SK snRNP complex preventing RNA polymerase II phosphorylation and subsequent transcriptional elongation. May also regulate NF-kappa-B, ESR1, NR3C1 and CIITA-dependent transcriptional activity. Plays a role in the regulation of DNA virus-mediated innate immune response by assembling into the HDP-RNP complex, a complex that serves as a platform for IRF3 phosphorylation and subsequent innate immune response activation through the cGAS-STING pathway. In Rattus norvegicus (Rat), this protein is Protein HEXIM1 (Hexim1).